Here is a 189-residue protein sequence, read N- to C-terminus: Elongation factor P (189 aa).

Belongs to the elongation factor P family.

The protein localises to the cytoplasm. The protein operates within protein biosynthesis; polypeptide chain elongation. Its function is as follows. Involved in peptide bond synthesis. Stimulates efficient translation and peptide-bond synthesis on native or reconstituted 70S ribosomes in vitro. Probably functions indirectly by altering the affinity of the ribosome for aminoacyl-tRNA, thus increasing their reactivity as acceptors for peptidyl transferase. The sequence is that of Elongation factor P from Pseudomonas syringae pv. syringae (strain B728a).